We begin with the raw amino-acid sequence, 121 residues long: Small ribosomal subunit protein uS13 (121 aa).

A disordered region spans residues 94-121 (GLPVRGQRTRTNARTRKGPRKGAAALKK).

Belongs to the universal ribosomal protein uS13 family. Part of the 30S ribosomal subunit. Forms a loose heterodimer with protein S19. Forms two bridges to the 50S subunit in the 70S ribosome.

Functionally, located at the top of the head of the 30S subunit, it contacts several helices of the 16S rRNA. In the 70S ribosome it contacts the 23S rRNA (bridge B1a) and protein L5 of the 50S subunit (bridge B1b), connecting the 2 subunits; these bridges are implicated in subunit movement. Contacts the tRNAs in the A and P-sites. The sequence is that of Small ribosomal subunit protein uS13 from Verminephrobacter eiseniae (strain EF01-2).